The following is a 272-amino-acid chain: Cytochrome b-c1 complex subunit Rieske-1, mitochondrial (272 aa).

The transit peptide at 1 to 60 directs the protein to the mitochondrion; sequence MLRVAGRRLFSVSQRSSTATSFVVSRDHTLSDGGGDSSSAPRSLPSADLSSYHRSLIRGF. Positions 27–46 are disordered; that stretch reads DHTLSDGGGDSSSAPRSLPS. Over 61–109 the chain is Mitochondrial matrix; the sequence is SSQVLAQGNEIGFGSEVPATVEAVKTPNSKIVYDDHNHERYPPGDPSKR. Residues 110 to 132 form a helical membrane-spanning segment; it reads AFAYFVLSGGRFVYASVLRLLVL. Over 133–272 the chain is Mitochondrial intermembrane; that stretch reads KLIVSMSASK…FLEENKLLIG (140 aa). Residues 201-270 form the Rieske domain; the sequence is VRVKNPEWLV…YSFLEENKLL (70 aa). The [2Fe-2S] cluster site is built by cysteine 215, histidine 217, cysteine 234, and histidine 237. Cysteine 220 and cysteine 236 form a disulfide bridge.

It belongs to the Rieske iron-sulfur protein family. In terms of assembly, component of the ubiquinol-cytochrome c oxidoreductase (cytochrome b-c1 complex, complex III, CIII), a multisubunit enzyme composed of 10 subunits. The complex is composed of 3 respiratory subunits cytochrome b (MT-CYB), cytochrome c1 (CYC1-1 or CYC1-2) and Rieske protein (UCR1-1 or UCR1-2), 2 core protein subunits MPPalpha1 (or MPPalpha2) and MPPB, and 5 low-molecular weight protein subunits QCR7-1 (or QCR7-2), UCRQ-1 (or UCRQ-2), QCR9, UCRY and probably QCR6-1 (or QCR6-2). The complex exists as an obligatory dimer and forms supercomplexes (SCs) in the inner mitochondrial membrane with NADH-ubiquinone oxidoreductase (complex I, CI), resulting in different assemblies (supercomplexes SCI(1)III(2) and SCI(2)III(4)). [2Fe-2S] cluster is required as a cofactor.

The protein localises to the mitochondrion inner membrane. The catalysed reaction is a quinol + 2 Fe(III)-[cytochrome c](out) = a quinone + 2 Fe(II)-[cytochrome c](out) + 2 H(+)(out). In terms of biological role, component of the ubiquinol-cytochrome c oxidoreductase, a multisubunit transmembrane complex that is part of the mitochondrial electron transport chain which drives oxidative phosphorylation. The respiratory chain contains 3 multisubunit complexes succinate dehydrogenase (complex II, CII), ubiquinol-cytochrome c oxidoreductase (cytochrome b-c1 complex, complex III, CIII) and cytochrome c oxidase (complex IV, CIV), that cooperate to transfer electrons derived from NADH and succinate to molecular oxygen, creating an electrochemical gradient over the inner membrane that drives transmembrane transport and the ATP synthase. The cytochrome b-c1 complex catalyzes electron transfer from ubiquinol to cytochrome c, linking this redox reaction to translocation of protons across the mitochondrial inner membrane, with protons being carried across the membrane as hydrogens on the quinol. In the process called Q cycle, 2 protons are consumed from the matrix, 4 protons are released into the intermembrane space and 2 electrons are passed to cytochrome c. The Rieske protein is a catalytic core subunit containing a [2Fe-2S] iron-sulfur cluster. It cycles between 2 conformational states during catalysis to transfer electrons from the quinol bound in the Q(0) site in cytochrome b to cytochrome c1. This Arabidopsis thaliana (Mouse-ear cress) protein is Cytochrome b-c1 complex subunit Rieske-1, mitochondrial.